We begin with the raw amino-acid sequence, 355 residues long: MHC class I-like protein MILL2 (355 aa).

An N-terminal signal peptide occupies residues 1 to 29 (MKASSGKPREFRPAVLLLILGLLLRDSRG). An alpha-1 region spans residues 46 to 137 (RLTRTHTLRY…VINQKSQEEG (92 aa)). 3 disulfide bridges follow: Cys-96–Cys-107, Cys-147–Cys-210, and Cys-249–Cys-306. N-linked (GlcNAc...) asparagine glycosylation is found at Asn-104 and Asn-152. The alpha-2 stretch occupies residues 138 to 229 (LHTLQATLGC…SLRNGLQDTG (92 aa)). The tract at residues 230-323 (PPMVTVTCRN…SIMQTAVSGH (94 aa)) is alpha-3. Residues 231–321 (PMVTVTCRNY…NHSIMQTAVS (91 aa)) enclose the Ig-like C1-type domain. Asn-312 carries an N-linked (GlcNAc...) asparagine glycan. A connecting peptide region spans residues 324–329 (AAEDSQ). Asp-330 is lipidated: GPI-anchor amidated aspartate. Residues 331-355 (VASSATASAGSALPVVLAVALARAN) constitute a propeptide, removed in mature form.

It belongs to the MHC class I family. Heterodimer with B2M (beta-2-microglobulin). Post-translationally, N-glycosylated. As to expression, ubiquitously expressed in neonatal and adult tissues.

The protein localises to the cell membrane. Binds to heparan sulfate proteoglycans on the surface of fibroblast (NIH-3T3) cells. The chain is MHC class I-like protein MILL2 from Mus musculus (Mouse).